The following is a 465-amino-acid chain: 3-isopropylmalate dehydratase large subunit (465 aa).

3 residues coordinate [4Fe-4S] cluster: cysteine 347, cysteine 407, and cysteine 410.

The protein belongs to the aconitase/IPM isomerase family. LeuC type 1 subfamily. Heterodimer of LeuC and LeuD. [4Fe-4S] cluster is required as a cofactor.

The catalysed reaction is (2R,3S)-3-isopropylmalate = (2S)-2-isopropylmalate. It participates in amino-acid biosynthesis; L-leucine biosynthesis; L-leucine from 3-methyl-2-oxobutanoate: step 2/4. Catalyzes the isomerization between 2-isopropylmalate and 3-isopropylmalate, via the formation of 2-isopropylmaleate. This chain is 3-isopropylmalate dehydratase large subunit, found in Buchnera aphidicola subsp. Pemphigus spyrothecae.